A 189-amino-acid chain; its full sequence is Probable RNA 2'-phosphotransferase (189 aa).

Belongs to the KptA/TPT1 family.

Removes the 2'-phosphate from RNA via an intermediate in which the phosphate is ADP-ribosylated by NAD followed by a presumed transesterification to release the RNA and generate ADP-ribose 1''-2''-cyclic phosphate (APPR&gt;P). May function as an ADP-ribosylase. This chain is Probable RNA 2'-phosphotransferase, found in Streptomyces griseus subsp. griseus (strain JCM 4626 / CBS 651.72 / NBRC 13350 / KCC S-0626 / ISP 5235).